A 247-amino-acid polypeptide reads, in one-letter code: MVRNDLVMEIPWDIEATLLSRPNRFLGIVEMDESTSSGPFQEKVHIHDPGRLEDLLYPGNRLLLRKATNPKRKTGWDVIAAKADDGWILINSIFHRRIAEWAIANKVCSCFENVLEVIPEQKFGDSRLDFLLKKSDTELWVEVKGCTLIYGNTATFPDAPTTRGKRHVGELKKALESGSEALILIIILRKDALCFKANASIDPDFAEVFKDAVNAGVQVCPLVFGYEGRELFYKGMVPLCTEEYNSI.

This sequence belongs to the SfsA family.

This Methanococcoides burtonii (strain DSM 6242 / NBRC 107633 / OCM 468 / ACE-M) protein is Sugar fermentation stimulation protein homolog.